Here is a 555-residue protein sequence, read N- to C-terminus: Beta-fructofuranosidase, cell wall isozyme (555 aa).

A signal peptide spans Met-1–Ala-22. Residues Trp-58–Asp-61, Gln-77, Trp-85, and Trp-120–Ser-121 contribute to the substrate site. Residue Asp-61 is part of the active site. Asp-140 is a catalytic residue. Asn-154 and Asn-181 each carry an N-linked (GlcNAc...) asparagine glycan. Residues Arg-186–Asp-187, Glu-241, and Asp-277 contribute to the substrate site. Asn-337 carries an N-linked (GlcNAc...) asparagine glycan. Cys-435 and Cys-481 are disulfide-bonded.

Belongs to the glycosyl hydrolase 32 family.

It carries out the reaction Hydrolysis of terminal non-reducing beta-D-fructofuranoside residues in beta-D-fructofuranosides.. This chain is Beta-fructofuranosidase, cell wall isozyme (BFRUCT1), found in Pisum sativum (Garden pea).